The chain runs to 160 residues: Cytochrome c-type biogenesis protein CcmE (160 aa).

Residues 1-8 lie on the Cytoplasmic side of the membrane; sequence MNPRRKKR. The chain crosses the membrane as a helical; Signal-anchor for type II membrane protein span at residues 9-29; the sequence is LGIILAIFFGISATVGLMVYA. At 30-160 the chain is on the periplasmic side; the sequence is LNQNMDLFYT…TTEQKEGNAQ (131 aa). Residues His128 and Tyr132 each coordinate heme.

It belongs to the CcmE/CycJ family.

Its subcellular location is the cell inner membrane. Its function is as follows. Heme chaperone required for the biogenesis of c-type cytochromes. Transiently binds heme delivered by CcmC and transfers the heme to apo-cytochromes in a process facilitated by CcmF and CcmH. In Vibrio atlanticus (strain LGP32) (Vibrio splendidus (strain Mel32)), this protein is Cytochrome c-type biogenesis protein CcmE.